We begin with the raw amino-acid sequence, 211 residues long: MKVTAAFAGLLVTAFAAPVPEPVLVSRSAGINYVQNYNGNLGDFTYDESAGTFSMYWEDGVSSDFVVGLGWTTGSSKAITYSAEYSASGSSSYLAVYGWVNYPQAEYYIVEDYGDYNPCSSATSLGTVYSDGSTYQVCTDTRTNEPSITGTSTFTQYFSVRESTRTSGTVTVANHFNFWAQHGFGNSDFNYQVMAVEAWSGAGSASVTISS.

The N-terminal stretch at 1–27 is a signal peptide; the sequence is MKVTAAFAGLLVTAFAAPVPEPVLVSR. The 183-residue stretch at 28 to 210 folds into the GH11 domain; that stretch reads SAGINYVQNY…GAGSASVTIS (183 aa). Residue E106 is the Nucleophile of the active site. A disulfide bridge links C119 with C138. The active-site Proton donor is the E197.

It belongs to the glycosyl hydrolase 11 (cellulase G) family.

Its subcellular location is the secreted. The catalysed reaction is Endohydrolysis of (1-&gt;4)-beta-D-xylosidic linkages in xylans.. Its pathway is glycan degradation; xylan degradation. Endo-1,4-beta-xylanase involved in the hydrolysis of xylan, a major structural heterogeneous polysaccharide found in plant biomass representing the second most abundant polysaccharide in the biosphere, after cellulose. This is Endo-1,4-beta-xylanase A (xynA) from Aspergillus niger.